Reading from the N-terminus, the 485-residue chain is Hemolysin (485 aa).

The signal sequence occupies residues 1 to 28 (MKNFKGRKFLTCVLVSLCTLNYSSISFA). 4 beta stranded membrane-spanning segments follow: residues 196 to 209 (KAQI…NAKY), 216 to 225 (IDFNAVANGE), 294 to 303 (SKDVQAAFKA), and 311 to 323 (ETSG…FEES). The short motif at 465–475 (ECTGLAWEWWR) is the Conserved undecapeptide element.

The protein belongs to the cholesterol-dependent cytolysin family. Homooligomeric pore complex of 35 to 50 subunits; when inserted in the host membrane.

It localises to the secreted. The protein localises to the host cell membrane. Functionally, a cholesterol-dependent toxin with hemolytic activity against host red blood cells. Causes cytolysis by forming pores in cholesterol containing host membranes. binding to target membranes, the protein undergoes a major conformation change, leading to its insertion in the host membrane and formation of an oligomeric pore complex. Cholesterol is required for binding to host membranes, membrane insertion and pore formation; cholesterol binding is mediated by a Thr-Leu pair in the C-terminus. Can be reversibly inactivated by oxidation. The chain is Hemolysin from Bacillus cereus.